The sequence spans 243 residues: MDPWIALSSPLTSQTVEYVANTLRIMCAISWNISYMSMAYYSFRDKTYGNALIPLCNNIAWEFVYSFIHCPKLTFVRIENTGWFLLNIVVMYAAIKYSENEWKHAPLVQRNLPFIFAVGISAMIAGHLALAAQIGPRIAFVWSAKGCQLVLSTGALSQLLSRGSTRGGSYVVWLSRYLGTVFIDVMVTIRHVYRAAGPSWPSSPLLLWFMAVFHLLDWTYGFCFYHIRRQELVSEAAEKDKDK.

7 helical membrane-spanning segments follow: residues 20–42, 51–71, 75–95, 112–132, 138–160, 169–189, and 205–225; these read ANTL…AYYS, ALIP…IHCP, FVRI…YAAI, LPFI…ALAA, IAFV…SQLL, SYVV…MVTI, and LLLW…FCFY.

This sequence belongs to the paxB family.

It localises to the membrane. The catalysed reaction is (3R)-[(10S)-11-epoxyfarnesyl]-2,3,5-trimethyl-6-oxido-4-oxocyclohexa-1,5-diene-1-carboxylate + H(+) = asnovolin H. Its pathway is secondary metabolite biosynthesis; terpenoid biosynthesis. Functionally, terpene cyclase; part of the gene cluster that mediates the biosynthesis of novofumigatonin, a heavily oxygenated meroterpenoid containing a unique orthoester moiety. The first step of the pathway is the synthesis of 3,5-dimethylorsellinic acid (DMOA) by the polyketide synthase nvfA via condensation of one acetyl-CoA starter unit with 3 malonyl-CoA units and 2 methylations. DMOA is then converted to farnesyl-DMOA by the farnesyltransferase nvfB. Epoxydation by FAD-dependent monooxygenase nvfK, followed by a protonation-initiated cyclization catalyzed by the terpene cyclase nvfL leads to the production of asnavolin H. The short chain dehydrogenase nvfC then as a 3-OH dehydrogenase of asnovolin H to yield chemesin D. There are two branches to synthesize asnovolin A from chemesin D. In one branch, chemesin D undergoes Baeyer-Villiger oxidation by nvfH, methylation by nvfJ, and enoyl reduction by the nvfM D enoylreductase that reduces the double bond between C-5'and C-6', to form respectively asnovolin I, asnovolin K, and asnovolin A. In the other branch, the methylation precedes the Baeyer-Villiger oxidation and the enoyl reduction to yield asnovolin A via the asnovolin J intermediate. Asnovolin A is further converted to fumigatonoid A by the Fe(II)/2-oxoglutarate-dependent dioxygenase nvfI that catalyzes an endoperoxidation reaction. The alpha/beta hydrolase nvfD then acts as an epimerase that converts fumigatonoid A to its C-5' epimer, which then undergoes spontaneous or nvfD-catalyzed lactonization. The following step utilizes the ketoreductase nvfG to produce fumigatonoid B. The dioxygenase nvfE further converts fumigatonoid B into fumigatonoid C. Finally the Fe(II)/2-oxoglutarate-dependent dioxygenase nvfF catalyzes two rounds of oxidation to transform fumigatonoid C into the end product, novofumigatonin A. This Aspergillus novofumigatus (strain IBT 16806) protein is Asnovolin H synthase nvfL.